The primary structure comprises 766 residues: Flocculation suppression protein (766 aa).

Disordered regions lie at residues 1-52 (MSEE…HGSK), 129-181 (HDHS…PTKI), 203-247 (KRRA…SSNS), 547-619 (KPVP…SISG), and 657-766 (SVTP…KVKM). Low complexity-rich tracts occupy residues 8–19 (SAPAPASTPAPA) and 134–147 (NDAN…TNDD). Residues 64–186 (IFIHKLYQIL…NPTKIWEFKH (123 aa)) mediate DNA binding. Basic and acidic residues predominate over residues 171-181 (QEKEKSNPTKI). Residues 208-224 (SRNNSSINSRKNSSNQN) are compositionally biased toward low complexity. S220 carries the post-translational modification Phosphoserine. Polar residues predominate over residues 236-247 (SSIQDPSTSSNS). Phosphoserine is present on S556. The span at 679 to 699 (AVSSNLINSPMNVEHSSSLSQ) shows a compositional bias: polar residues. Residues 708–719 (LPQPSLPTTSTT) are compositionally biased toward low complexity. The residue at position 733 (S733) is a Phosphoserine. A compositionally biased stretch (polar residues) spans 738-750 (LLNQEDSSTSSAD).

The protein in the N-terminal section; belongs to the HSF family.

Its subcellular location is the nucleus. Involved in cell surface assembly and regulation of the gene related to flocculation (asexual cell aggregation). Mutations in SFL1 causes constitutive cell aggregation. In Saccharomyces cerevisiae (strain ATCC 204508 / S288c) (Baker's yeast), this protein is Flocculation suppression protein (SFL1).